The sequence spans 185 residues: Peptide deformylase (185 aa).

Fe cation-binding residues include Cys-109 and His-152. Residue Glu-153 is part of the active site. His-156 contributes to the Fe cation binding site.

It belongs to the polypeptide deformylase family. Requires Fe(2+) as cofactor.

It carries out the reaction N-terminal N-formyl-L-methionyl-[peptide] + H2O = N-terminal L-methionyl-[peptide] + formate. In terms of biological role, removes the formyl group from the N-terminal Met of newly synthesized proteins. Requires at least a dipeptide for an efficient rate of reaction. N-terminal L-methionine is a prerequisite for activity but the enzyme has broad specificity at other positions. This chain is Peptide deformylase, found in Roseiflexus sp. (strain RS-1).